Reading from the N-terminus, the 685-residue chain is Sodium-dependent phosphate transporter 1-A (685 aa).

The next 6 helical transmembrane spans lie at 21–41, 66–86, 106–126, 162–182, 207–227, and 234–254; these read IMAP…VLAF, ACIL…AKVS, LMAG…AASF, IVLS…LLFL, ACTI…LLGF, and GIIL…WFVV. 2 disordered regions span residues 438 to 458 and 483 to 513; these read RNRD…HGAD and EAEE…HDQD. Positions 483–496 are enriched in acidic residues; it reads EAEEQEEGSVEDVE. Residues 497-513 show a composition bias toward basic and acidic residues; that stretch reads TDRKSSSSSLEERHDQD. Transmembrane regions (helical) follow at residues 517 to 537, 565 to 585, 606 to 626, and 656 to 676; these read VSLL…FAHG, ATPI…LWVW, FSIE…GLPI, and IFLA…GIMA.

The protein belongs to the inorganic phosphate transporter (PiT) (TC 2.A.20) family.

It is found in the membrane. Sodium-phosphate symporter which plays a fundamental housekeeping role in phosphate transport. This chain is Sodium-dependent phosphate transporter 1-A (slc20a1-a), found in Xenopus laevis (African clawed frog).